Consider the following 126-residue polypeptide: Large ribosomal subunit protein bL12 (126 aa).

This sequence belongs to the bacterial ribosomal protein bL12 family. Homodimer. Part of the ribosomal stalk of the 50S ribosomal subunit. Forms a multimeric L10(L12)X complex, where L10 forms an elongated spine to which 2 to 4 L12 dimers bind in a sequential fashion. Binds GTP-bound translation factors.

Its function is as follows. Forms part of the ribosomal stalk which helps the ribosome interact with GTP-bound translation factors. Is thus essential for accurate translation. In Methylorubrum populi (strain ATCC BAA-705 / NCIMB 13946 / BJ001) (Methylobacterium populi), this protein is Large ribosomal subunit protein bL12.